The following is a 413-amino-acid chain: ATP-dependent (S)-NAD(P)H-hydrate dehydratase (413 aa).

Residues asparagine 98 to glycine 402 form the YjeF C-terminal domain. Residues glycine 199 and asparagine 252 to alanine 258 each bind (6S)-NADPHX. ATP is bound by residues lysine 292–aspartate 296 and glycine 311–glycine 320. Aspartate 321 contacts (6S)-NADPHX.

Belongs to the NnrD/CARKD family. Requires Mg(2+) as cofactor.

It catalyses the reaction (6S)-NADHX + ATP = ADP + phosphate + NADH + H(+). The enzyme catalyses (6S)-NADPHX + ATP = ADP + phosphate + NADPH + H(+). Catalyzes the dehydration of the S-form of NAD(P)HX at the expense of ATP, which is converted to ADP. Together with NAD(P)HX epimerase, which catalyzes the epimerization of the S- and R-forms, the enzyme allows the repair of both epimers of NAD(P)HX, a damaged form of NAD(P)H that is a result of enzymatic or heat-dependent hydration. In Heterostelium pallidum (strain ATCC 26659 / Pp 5 / PN500) (Cellular slime mold), this protein is ATP-dependent (S)-NAD(P)H-hydrate dehydratase.